The following is a 40-amino-acid chain: Large ribosomal subunit protein bL36A (40 aa).

Belongs to the bacterial ribosomal protein bL36 family.

This is Large ribosomal subunit protein bL36A from Paenarthrobacter aurescens (strain TC1).